Reading from the N-terminus, the 37-residue chain is Large ribosomal subunit protein bL36 (37 aa).

The protein belongs to the bacterial ribosomal protein bL36 family.

This chain is Large ribosomal subunit protein bL36, found in Janthinobacterium sp. (strain Marseille) (Minibacterium massiliensis).